We begin with the raw amino-acid sequence, 266 residues long: Putative tyrosine phosphatase 197R (266 aa).

The Tyrosine-protein phosphatase domain occupies 15-167 (RPTLGSLSDK…LFGSQNINND (153 aa)). Cys111 serves as the catalytic Phosphocysteine intermediate.

The protein belongs to the protein-tyrosine phosphatase family.

The enzyme catalyses O-phospho-L-tyrosyl-[protein] + H2O = L-tyrosyl-[protein] + phosphate. The polypeptide is Putative tyrosine phosphatase 197R (Invertebrate iridescent virus 6 (IIV-6)).